The primary structure comprises 120 residues: UPF0102 protein HSM_1206 (120 aa).

Belongs to the UPF0102 family.

This is UPF0102 protein HSM_1206 from Histophilus somni (strain 2336) (Haemophilus somnus).